A 75-amino-acid polypeptide reads, in one-letter code: uncharacterized protein (75 aa).

This is an uncharacterized protein from Bacillus subtilis (strain 168).